We begin with the raw amino-acid sequence, 583 residues long: Isocitrate dehydrogenase kinase/phosphatase (583 aa).

ATP is bound by residues 315 to 321 (APGIRGM) and Lys336. The active site involves Asp371.

The protein belongs to the AceK family.

Its subcellular location is the cytoplasm. It catalyses the reaction L-seryl-[isocitrate dehydrogenase] + ATP = O-phospho-L-seryl-[isocitrate dehydrogenase] + ADP + H(+). Bifunctional enzyme which can phosphorylate or dephosphorylate isocitrate dehydrogenase (IDH) on a specific serine residue. This is a regulatory mechanism which enables bacteria to bypass the Krebs cycle via the glyoxylate shunt in response to the source of carbon. When bacteria are grown on glucose, IDH is fully active and unphosphorylated, but when grown on acetate or ethanol, the activity of IDH declines drastically concomitant with its phosphorylation. This is Isocitrate dehydrogenase kinase/phosphatase from Salmonella paratyphi B (strain ATCC BAA-1250 / SPB7).